A 352-amino-acid chain; its full sequence is Phospho-N-acetylmuramoyl-pentapeptide-transferase (352 aa).

The next 10 helical transmembrane spans lie at 16 to 36 (YITF…LLFM), 66 to 86 (TPTM…LLCA), 88 to 108 (LNNL…LIGL), 129 to 149 (MLYL…FGME), 160 to 180 (PLLS…VATS), 191 to 211 (GLAT…VYIA), 228 to 248 (SGEA…FLWF), 255 to 275 (LFMG…MAII), 280 to 300 (FLLF…ILQI), and 329 to 349 (KIIV…LLTL).

It belongs to the glycosyltransferase 4 family. MraY subfamily. The cofactor is Mg(2+).

It is found in the cell inner membrane. The enzyme catalyses UDP-N-acetyl-alpha-D-muramoyl-L-alanyl-gamma-D-glutamyl-meso-2,6-diaminopimeloyl-D-alanyl-D-alanine + di-trans,octa-cis-undecaprenyl phosphate = di-trans,octa-cis-undecaprenyl diphospho-N-acetyl-alpha-D-muramoyl-L-alanyl-D-glutamyl-meso-2,6-diaminopimeloyl-D-alanyl-D-alanine + UMP. It participates in cell wall biogenesis; peptidoglycan biosynthesis. Functionally, catalyzes the initial step of the lipid cycle reactions in the biosynthesis of the cell wall peptidoglycan: transfers peptidoglycan precursor phospho-MurNAc-pentapeptide from UDP-MurNAc-pentapeptide onto the lipid carrier undecaprenyl phosphate, yielding undecaprenyl-pyrophosphoryl-MurNAc-pentapeptide, known as lipid I. In Wolinella succinogenes (strain ATCC 29543 / DSM 1740 / CCUG 13145 / JCM 31913 / LMG 7466 / NCTC 11488 / FDC 602W) (Vibrio succinogenes), this protein is Phospho-N-acetylmuramoyl-pentapeptide-transferase.